A 448-amino-acid polypeptide reads, in one-letter code: F-box/FBD/LRR-repeat protein At2g04230 (448 aa).

The F-box domain occupies 12 to 64; it reads EDRISDLPDALLLQILSSLPTENAIATSVLSKRWRSLWTMLPKLKFDSNFNPV. LRR repeat units follow at residues 72 to 98, 149 to 176, 177 to 202, 204 to 225, 226 to 251, 271 to 296, and 319 to 345; these read PTMFSENVYKTLSLHKAPVLESLHLSF, ILKLKCAIDLDFPSRVCLKSLRKLYLDQ, VHFKDEESVCNLLCGCPSLQDLVVHR, SNADVATFTIASPSLQRLTIED, LRQEGGYGNGSYVINAPGLKYLNING, ISNVSGITNENILESLTSAKRLILHL, and THEREWWNLLSIMLDSSPKLQILKLTD. The region spanning 359 to 410 is the FBD domain; the sequence is KWNPPKCAPECLLFHLETFLWIGYEWQRGDEKEVATYILENARRLKKATFST.

In Arabidopsis thaliana (Mouse-ear cress), this protein is F-box/FBD/LRR-repeat protein At2g04230.